The primary structure comprises 143 residues: Midkine (143 aa).

The signal sequence occupies residues 1–20; that stretch reads MQHRGFLLLTLLALLALTSA. Cystine bridges form between Cys-37/Cys-61, Cys-45/Cys-70, Cys-52/Cys-74, Cys-84/Cys-116, and Cys-94/Cys-126.

The protein belongs to the pleiotrophin family. In terms of assembly, homodimer. Interacts with ALK. Interacts with LRP1; promotes neuronal survival. Interacts with LRP2. Interacts with NCAM1. Interacts (via C-terminal) with PTPRZ1 (via chondroitin sulfate chains); this interaction is inhibited by PTN; this interaction promotes neuronal migration. Interacts with NCL; this interaction promotes NCL clustering and lateral movements of this complex into lipid rafts leading to MDK internalization. Interacts with LRP6 and LRP8: this interaction is calcium dependent. Interacts with ITGA4. Interacts with ITGA6. Interacts with ITGB1. Interacts with ITGA4:ITGB1 complex; this interaction mediates MDK-induced osteoblast cells migration through PXN phosphorylation. Interacts with ITGA6:ITGB1 complex; this interaction mediates MDK-induced neurite outgrowth. Interacts with NOTCH2; this interaction mediates a nuclear accumulation of NOTCH2 and therefore activation of NOTCH2 signaling leading to interaction between HES1 and STAT3. Interacts with GPC2 (via heparan sulfate chain); this interaction is inhibited by heparin followed by chondroitin sulfate E; this interaction induces GPC2 clustering through heparan sulfate chain; this interaction induces neuronal cell adhesion and neurite outgrowth. Interacts with SDC3; this interaction induces SDC3 clustering; this interaction induces neuronal cell adhesion and neurite outgrowth. Interacts with SDC1. Interacts with CSPG5; this interaction promotes elongation of oligodendroglial precursor-like cells. In terms of tissue distribution, expressed in various tumor cell lines. In insulinoma tissue predominantly expressed in precancerous lesions.

Its subcellular location is the secreted. In terms of biological role, secreted protein that functions as a cytokine and growth factor and mediates its signal through cell-surface proteoglycan and non-proteoglycan receptors. Binds cell-surface proteoglycan receptors via their chondroitin sulfate (CS) groups. Thereby regulates many processes like inflammatory response, cell proliferation, cell adhesion, cell growth, cell survival, tissue regeneration, cell differentiation and cell migration. Participates in inflammatory processes by exerting two different activities. Firstly, mediates neutrophils and macrophages recruitment to the sites of inflammation both by direct action by cooperating namely with ITGB2 via LRP1 and by inducing chemokine expression. This inflammation can be accompanied by epithelial cell survival and smooth muscle cell migration after renal and vessel damage, respectively. Secondly, suppresses the development of tolerogenic dendric cells thereby inhibiting the differentiation of regulatory T cells and also promote T cell expansion through NFAT signaling and Th1 cell differentiation. Promotes tissue regeneration after injury or trauma. After heart damage negatively regulates the recruitment of inflammatory cells and mediates cell survival through activation of anti-apoptotic signaling pathways via MAPKs and AKT pathways through the activation of angiogenesis. Also facilitates liver regeneration as well as bone repair by recruiting macrophage at trauma site and by promoting cartilage development by facilitating chondrocyte differentiation. Plays a role in brain by promoting neural precursor cells survival and growth through interaction with heparan sulfate proteoglycans. Binds PTPRZ1 and promotes neuronal migration and embryonic neurons survival. Binds SDC3 or GPC2 and mediates neurite outgrowth and cell adhesion. Binds chondroitin sulfate E and heparin leading to inhibition of neuronal cell adhesion induced by binding with GPC2. Binds CSPG5 and promotes elongation of oligodendroglial precursor-like cells. Also binds ITGA6:ITGB1 complex; this interaction mediates MDK-induced neurite outgrowth. Binds LRP1; promotes neuronal survival. Binds ITGA4:ITGB1 complex; this interaction mediates MDK-induced osteoblast cells migration through PXN phosphorylation. Binds anaplastic lymphoma kinase (ALK) which induces ALK activation and subsequent phosphorylation of the insulin receptor substrate (IRS1), followed by the activation of mitogen-activated protein kinase (MAPK) and PI3-kinase, and the induction of cell proliferation. Promotes epithelial to mesenchymal transition through interaction with NOTCH2. During arteriogenesis, plays a role in vascular endothelial cell proliferation by inducing VEGFA expression and release which in turn induces nitric oxide synthase expression. Moreover activates vasodilation through nitric oxide synthase activation. Negatively regulates bone formation in response to mechanical load by inhibiting Wnt/beta-catenin signaling in osteoblasts. In addition plays a role in hippocampal development, working memory, auditory response, early fetal adrenal gland development and the female reproductive system. The chain is Midkine from Homo sapiens (Human).